Here is a 231-residue protein sequence, read N- to C-terminus: 2-C-methyl-D-erythritol 4-phosphate cytidylyltransferase (231 aa).

Belongs to the IspD/TarI cytidylyltransferase family. IspD subfamily.

It carries out the reaction 2-C-methyl-D-erythritol 4-phosphate + CTP + H(+) = 4-CDP-2-C-methyl-D-erythritol + diphosphate. It functions in the pathway isoprenoid biosynthesis; isopentenyl diphosphate biosynthesis via DXP pathway; isopentenyl diphosphate from 1-deoxy-D-xylulose 5-phosphate: step 2/6. Functionally, catalyzes the formation of 4-diphosphocytidyl-2-C-methyl-D-erythritol from CTP and 2-C-methyl-D-erythritol 4-phosphate (MEP). This Fusobacterium nucleatum subsp. nucleatum (strain ATCC 25586 / DSM 15643 / BCRC 10681 / CIP 101130 / JCM 8532 / KCTC 2640 / LMG 13131 / VPI 4355) protein is 2-C-methyl-D-erythritol 4-phosphate cytidylyltransferase.